A 648-amino-acid polypeptide reads, in one-letter code: Threonine--tRNA ligase (648 aa).

A TGS domain is found at 1–61; it reads MIKITLPDGS…TTDGSLVLYT (61 aa). Positions 240-539 are catalytic; that stretch reads DHRKLGKELE…LLEHTAGNFP (300 aa). Residues Cys-335, His-386, and His-516 each coordinate Zn(2+).

It belongs to the class-II aminoacyl-tRNA synthetase family. In terms of assembly, homodimer. Zn(2+) is required as a cofactor.

The protein localises to the cytoplasm. The enzyme catalyses tRNA(Thr) + L-threonine + ATP = L-threonyl-tRNA(Thr) + AMP + diphosphate + H(+). In terms of biological role, catalyzes the attachment of threonine to tRNA(Thr) in a two-step reaction: L-threonine is first activated by ATP to form Thr-AMP and then transferred to the acceptor end of tRNA(Thr). Also edits incorrectly charged L-seryl-tRNA(Thr). The protein is Threonine--tRNA ligase of Flavobacterium psychrophilum (strain ATCC 49511 / DSM 21280 / CIP 103535 / JIP02/86).